Reading from the N-terminus, the 366-residue chain is Protein sigma-NS (366 aa).

The interval 1-11 (MASSLRAAISK) is important for ssRNA-binding and formation of complexes.

This sequence belongs to the orthoreovirus sigma-NS protein family. Homooligomer; in presence of RNA. Interacts with protein mu-NS; this interaction allows the localization of sigma-NS to the viral factories. Interacts with host G3BP1 (via C-terminus); this interaction induces the relocalization of G3BP1 and other SG proteins to the viral factories periphery.

It localises to the host cytoplasm. Functionally, protein that binds to ssRNA and participates with protein mu-NS in forming the matrix of viral factories, which are large inclusions in the host cytoplasm where replication intermediates are assembled and viral RNA replication takes place. Plays a role in the inhibition of the integrated stress response (ISR) to escape from host cell translational shutoff. Participates in the disruption of stress granules (SG) through its association with host G3BP1 and mu-NS. The sequence is that of Protein sigma-NS (S3) from Mammalia (T2J).